Consider the following 289-residue polypeptide: Tachykinins (289 aa).

The first 24 residues, 1 to 24 (MRPLSGLIALALLLLLLLTAPSSA), serve as a signal peptide directing secretion. Residues 24 to 94 (AADTETESSG…DEEADSSYAE (71 aa)) form a disordered region. A propeptide spanning residues 25–47 (ADTETESSGSPLTPGAEEPRRVV) is cleaved from the precursor. Arg59 is modified (arginine amide). Residues 60–69 (GKKDEEHDTS) are compositionally biased toward basic and acidic residues. Asn95 bears the Asparagine amide mark. The residue at position 110 (Arg110) is an Arginine amide. Position 153 is a valine amide (Val153). Arg165, Arg200, Arg239, and Arg281 each carry arginine amide. Positions 285 to 289 (PALFE) are excised as a propeptide.

Belongs to the tachykinin family. In terms of tissue distribution, strong expression is seen in a group of 14 cells plus one isolated cell in the midgut of stage 17 embryos. Also expressed in a pair of medially located unidentified cells, just posterior to the brain, and in two lateral groups of cells that may be associated with tracheae. Expression in the larval gut is restricted to cells with endocrine cell-like morphology in the posterior midgut, just anterior to the malphigian tubules. In the brain, expression is detected in a restricted number of neuronal cell bodies. Expression in the adult female gut is restricted to the midgut with no expression detected in the hindgut.

The protein localises to the secreted. Its function is as follows. Tachykinins are active peptides which excite neurons, evoke behavioral responses, are potent vasodilators and secretagogues, and contract (directly or indirectly) many smooth muscles. Stimulates gut muscle contractions. Required for the response to the male sex pheromone CH503 which is transferred from males to females during mating and inhibits courtship behavior by other males. The Gr68a gustatory receptor is required for detection of the pheromone and Gr68a-expressing neurons in the male foreleg relay signals to the suboesophageal zone (SEZ) which leads to courtship suppression through release of tachykinin from a cluster of 8-10 neurons in the SEZ. This is Tachykinins from Drosophila melanogaster (Fruit fly).